A 351-amino-acid chain; its full sequence is Transmembrane protein 115 (351 aa).

Topologically, residues 1-19 (MQRALPGARQHLGAILSSA) are cytoplasmic. A mediates homooligomerization region spans residues 1 to 205 (MQRALPGARQ…FGLISSWVYL (205 aa)). A helical transmembrane segment spans residues 20–40 (SVVVKALCAAVLFLYLLSFAV). Topologically, residues 41–97 (DTGCLAVTPGYLFPPNFWIWTLATHGLMEQHVWDVAISLATVVVAGRLLEPLWGALE) are lumenal. A helical transmembrane segment spans residues 98–118 (LLIFFSVVNVSVGLLGAFAYL). Residues 119 to 126 (LTYMASFN) lie on the Cytoplasmic side of the membrane. The chain crosses the membrane as a helical span at residues 127–147 (LVYLFTVRIHGALGFLGGVLV). Residues 148–165 (ALKQTMGDCVVLRVPQVR) are Lumenal-facing. The helical transmembrane segment at 166–186 (VSVVPMLLLGLLLLLRLATLL) threads the bilayer. Topologically, residues 187 to 351 (QSPALASYGF…ITFEAAPPTL (165 aa)) are cytoplasmic. The mediates localization to the Golgi stretch occupies residues 206–229 (RFYQRHSRGRGDMADHFAFATFFP). Residues 300-351 (DQSVWPSMDDDEEEAGAKVDSPMPSDKAPTLPGKGAVPESSLITFEAAPPTL) form a disordered region. Thr329 is subject to Phosphothreonine.

It belongs to the TMEM115 family. Homooligomer. Interacts with COPB1. May interact with LMAN1. Interacts with the COG complex; probably through COG3.

It is found in the golgi apparatus. The protein resides in the golgi stack membrane. Functionally, may play a role in retrograde transport of proteins from the Golgi to the endoplasmic reticulum. May indirectly play a role in protein glycosylation in the Golgi. The chain is Transmembrane protein 115 from Bos taurus (Bovine).